The sequence spans 35 residues: uncharacterized protein (35 aa).

Low complexity predominate over residues 1–27 (MDQNEANIYNENNENNENNENENCQNE). A disordered region spans residues 1-35 (MDQNEANIYNENNENNENNENENCQNEPIRIKIII).

This is an uncharacterized protein from Dictyostelium discoideum (Social amoeba).